A 412-amino-acid chain; its full sequence is Multifunctional CCA protein (412 aa).

The ATP site is built by Gly-8 and Arg-11. The CTP site is built by Gly-8 and Arg-11. The Mg(2+) site is built by Asp-21 and Asp-23. ATP-binding residues include Arg-91, Arg-137, and Arg-140. Arg-91, Arg-137, and Arg-140 together coordinate CTP. The HD domain maps to 228–329 (TGIHTLMTLS…VKLFDSIDAW (102 aa)).

Belongs to the tRNA nucleotidyltransferase/poly(A) polymerase family. Bacterial CCA-adding enzyme type 1 subfamily. As to quaternary structure, monomer. Can also form homodimers and oligomers. It depends on Mg(2+) as a cofactor. Requires Ni(2+) as cofactor.

The catalysed reaction is a tRNA precursor + 2 CTP + ATP = a tRNA with a 3' CCA end + 3 diphosphate. The enzyme catalyses a tRNA with a 3' CCA end + 2 CTP + ATP = a tRNA with a 3' CCACCA end + 3 diphosphate. In terms of biological role, catalyzes the addition and repair of the essential 3'-terminal CCA sequence in tRNAs without using a nucleic acid template. Adds these three nucleotides in the order of C, C, and A to the tRNA nucleotide-73, using CTP and ATP as substrates and producing inorganic pyrophosphate. tRNA 3'-terminal CCA addition is required both for tRNA processing and repair. Also involved in tRNA surveillance by mediating tandem CCA addition to generate a CCACCA at the 3' terminus of unstable tRNAs. While stable tRNAs receive only 3'-terminal CCA, unstable tRNAs are marked with CCACCA and rapidly degraded. This Shigella sonnei (strain Ss046) protein is Multifunctional CCA protein.